Here is a 622-residue protein sequence, read N- to C-terminus: Polypeptide N-acetylgalactosaminyltransferase 6 (622 aa).

Topologically, residues 1-8 (MRLLRRRH) are cytoplasmic. The chain crosses the membrane as a helical; Signal-anchor for type II membrane protein span at residues 9–28 (MPLRLAMVGCAFVLFLFLLH). Residues 29–622 (RDVSSREEAT…SDPHQLWLFV (594 aa)) are Lumenal-facing. N86 carries N-linked (GlcNAc...) asparagine glycosylation. Cystine bridges form between C165-C402 and C393-C474. A catalytic subdomain A region spans residues 176 to 285 (LATTSVIIVF…HGWLEPLLAR (110 aa)). D269, H271, and H407 together coordinate Mn(2+). A catalytic subdomain B region spans residues 348 to 410 (PIKSPTFAGG…PCSVVGHVFR (63 aa)). A glycan (N-linked (GlcNAc...) asparagine) is linked at N476. One can recognise a Ricin B-type lectin domain in the interval 506 to 622 (TNQCLDVGEN…SDPHQLWLFV (117 aa)). A disulfide bridge links C509 with C527. 4 residues coordinate UDP-N-acetyl-alpha-D-galactosamine: D511, E514, H528, and N533. Disulfide bonds link C553–C566 and C597–C610.

The protein belongs to the glycosyltransferase 2 family. GalNAc-T subfamily. Mn(2+) serves as cofactor. In terms of tissue distribution, expressed in placenta and trachea. Weakly expressed in brain and pancreas. Expressed in fibroblast. Weakly or not expressed in lung, liver, muscle, kidney, spleen, thymus, prostate, testis, ovary, intestine, colon, leukocyte, stomach, thyroid, spinal cord, lymph node, trachea, adrenal gland and bone marrow.

It is found in the golgi apparatus membrane. It carries out the reaction L-seryl-[protein] + UDP-N-acetyl-alpha-D-galactosamine = a 3-O-[N-acetyl-alpha-D-galactosaminyl]-L-seryl-[protein] + UDP + H(+). It catalyses the reaction L-threonyl-[protein] + UDP-N-acetyl-alpha-D-galactosamine = a 3-O-[N-acetyl-alpha-D-galactosaminyl]-L-threonyl-[protein] + UDP + H(+). Its pathway is protein modification; protein glycosylation. In terms of biological role, catalyzes the initial reaction in O-linked oligosaccharide biosynthesis, the transfer of an N-acetyl-D-galactosamine residue to a serine or threonine residue on the protein receptor. May participate in synthesis of oncofetal fibronectin. Has activity toward MUC1A, MUC2, EA2 and fibronectin peptides. Glycosylates FGF23. In Homo sapiens (Human), this protein is Polypeptide N-acetylgalactosaminyltransferase 6 (GALNT6).